A 424-amino-acid chain; its full sequence is Solute carrier family 67 member A1 (424 aa).

Transmembrane regions (helical) follow at residues 26 to 46 (ILLT…QFSI), 59 to 79 (IAFG…GPVF), 90 to 110 (AALT…AAAS), 156 to 176 (LGLC…TLVS), 184 to 204 (AILA…CIPA), 243 to 263 (IFLV…MFSI), 276 to 296 (AGYL…LVIG), 312 to 332 (VLVF…FHFC), 334 to 354 (LVPG…SMLI), and 391 to 411 (FGVP…LLVL).

The protein belongs to the major facilitator (TC 2.A.1) superfamily. Organic cation transporter (TC 2.A.1.19) family. As to quaternary structure, interacts with RNF167. Expressed at high levels in adult and fetal kidney and liver, and adult colon. Expressed in fetal renal proximal tubules (at protein level). Expressed at lower levels in heart, brain and lung.

The protein localises to the apical cell membrane. In terms of biological role, may act as a transporter of organic cations based on a proton efflux antiport mechanism. May play a role in the transport of chloroquine and quinidine-related compounds in kidney. Plays a role in the regulation of lipid metabolism. The polypeptide is Solute carrier family 67 member A1 (Homo sapiens (Human)).